We begin with the raw amino-acid sequence, 330 residues long: Protein rlx (330 aa).

The segment at Leu220–Leu330 is disordered. Basic and acidic residues-rich tracts occupy residues Asn237–Arg269 and Gln279–Leu330.

Functionally, this protein is probably required for relaxation complex formation and plasmid mobilization by conjugative plasmids. This is Protein rlx (rlx) from Staphylococcus aureus.